The following is a 72-amino-acid chain: SPbeta prophage-derived uncharacterized protein YoqN (72 aa).

This chain is SPbeta prophage-derived uncharacterized protein YoqN (yoqN), found in Bacillus subtilis (strain 168).